The primary structure comprises 283 residues: Thymidylate synthase (283 aa).

Residue Arg-22 participates in dUMP binding. The Nucleophile role is filled by Cys-160. DUMP-binding positions include 180-183 (RSCD), Asn-191, and 221-223 (HIY). (6R)-5,10-methylene-5,6,7,8-tetrahydrofolate is bound at residue Asp-183. (6R)-5,10-methylene-5,6,7,8-tetrahydrofolate is bound at residue Ser-282.

Belongs to the thymidylate synthase family. Bacterial-type ThyA subfamily. As to quaternary structure, homodimer.

It is found in the cytoplasm. The catalysed reaction is dUMP + (6R)-5,10-methylene-5,6,7,8-tetrahydrofolate = 7,8-dihydrofolate + dTMP. The protein operates within pyrimidine metabolism; dTTP biosynthesis. Its function is as follows. Catalyzes the reductive methylation of 2'-deoxyuridine-5'-monophosphate (dUMP) to 2'-deoxythymidine-5'-monophosphate (dTMP) while utilizing 5,10-methylenetetrahydrofolate (mTHF) as the methyl donor and reductant in the reaction, yielding dihydrofolate (DHF) as a by-product. This enzymatic reaction provides an intracellular de novo source of dTMP, an essential precursor for DNA biosynthesis. This is Thymidylate synthase from Shewanella sediminis (strain HAW-EB3).